Consider the following 528-residue polypeptide: Nucleoporin ASM4 (528 aa).

Residues 2–3 (FG) form an FG 1 repeat. Residues 23–50 (TTQMFQSQSQLQPQPQPQPQQQQQHLQF) show a composition bias toward low complexity. Disordered stretches follow at residues 23 to 64 (TTQM…FGNS) and 88 to 144 (IKNG…SMNA). Polar residues-rich tracts occupy residues 51–64 (NGSS…FGNS) and 97–108 (QHGQGNNPSWVN). Residues 61 to 62 (FG) form an FG 2 repeat. Over residues 110 to 125 (PKKRFTPHTVIRRKTT) the composition is skewed to basic residues. Low complexity predominate over residues 127–141 (QNSSSDINQNDDSSS). FG repeat units follow at residues 195-196 (FG), 274-275 (FG), and 291-292 (FG). The RRM Nup35-type domain maps to 265-394 (SSSLSAIIVF…IPYSKNAVEQ (130 aa)). Residues S458 and S464 each carry the phosphoserine modification. The stretch at 490–510 (NLLRNLESKMRQQEAKYRNNE) forms a coiled coil. Residues 523-524 (FG) form an FG 6 repeat.

As to quaternary structure, component of the nuclear pore complex (NPC). NPC constitutes the exclusive means of nucleocytoplasmic transport. NPCs allow the passive diffusion of ions and small molecules and the active, nuclear transport receptor-mediated bidirectional transport of macromolecules such as proteins, RNAs, ribonucleoparticles (RNPs), and ribosomal subunits across the nuclear envelope. Due to its 8-fold rotational symmetry, all subunits are present with 8 copies or multiples thereof. ASM4 may form a subcomplex with NUP53, NDC1, and NUP170. In terms of processing, phosphorylated by CDC28.

The protein localises to the nucleus. It is found in the nuclear pore complex. It localises to the nucleus membrane. Functions as a component of the nuclear pore complex (NPC). NPC components, collectively referred to as nucleoporins (NUPs), can play the role of both NPC structural components and of docking or interaction partners for transiently associated nuclear transport factors. Active directional transport is assured by both, a Phe-Gly (FG) repeat affinity gradient for these transport factors across the NPC and a transport cofactor concentration gradient across the nuclear envelope (GSP1 and GSP2 GTPases associated predominantly with GTP in the nucleus, with GDP in the cytoplasm). May have a mitosis control function. This Saccharomyces cerevisiae (strain ATCC 204508 / S288c) (Baker's yeast) protein is Nucleoporin ASM4 (ASM4).